The primary structure comprises 165 residues: Growth arrest and DNA damage-inducible protein GADD45 alpha (165 aa).

Phosphothreonine is present on T2.

The protein belongs to the GADD45 family. As to quaternary structure, interacts with MAPK14. Predominantly monomeric but also forms dimers and other oligomers as concentration increases. Interacts with GADD45GIP1. Interacts weakly with PCNA. Interacts with AURKA, likely to compete with dimerization.

It is found in the nucleus. In T-cells, functions as a regulator of p38 MAPKs by inhibiting p88 phosphorylation and activity. Might affect PCNA interaction with some CDK (cell division protein kinase) complexes; stimulates DNA excision repair in vitro and inhibits entry of cells into S phase. This is Growth arrest and DNA damage-inducible protein GADD45 alpha (GADD45A) from Homo sapiens (Human).